Consider the following 513-residue polypeptide: Alpha-1B-glycoprotein (513 aa).

The N-terminal stretch at 1 to 20 is a signal peptide; sequence MSLLTTVLLLWGFTLGPGNA. Ig-like V-type domains follow at residues 22–126, 127–219, 220–312, 313–415, and 416–513; these read WLDS…VTGK, EPLP…MSAT, QLPP…PVEL, MWSD…LRIN, and GPAP…VEGS. Asn44, Asn89, and Asn192 each carry an N-linked (GlcNAc...) asparagine glycan. Cystine bridges form between Cys49–Cys96, Cys153–Cys195, Cys245–Cys292, Cys343–Cys392, and Cys441–Cys488. Residues Asn369, Asn381, Asn389, and Asn485 are each glycosylated (N-linked (GlcNAc...) asparagine).

Interacts with CRISP3. As to expression, isoform 1 is expressed in normal liver. Isoform 2 is expressed in the regenerating liver after partial hepatectomy and at very low levels in the normal lung, brain and testis.

It localises to the secreted. The protein is Alpha-1B-glycoprotein of Rattus norvegicus (Rat).